We begin with the raw amino-acid sequence, 312 residues long: NAD-dependent protein deacylase Sirt4 (312 aa).

The transit peptide at 1–16 (MRVGQLLRFRSTSLRS) directs the protein to the mitochondrion. The region spanning 28-312 (KPVVEDDIKR…FDFRNSKSVS (285 aa)) is the Deacetylase sirtuin-type domain. Residues 53-73 (GAGI…VGLY) and 134-137 (QNVD) each bind NAD(+). The active-site Proton acceptor is His-152. Residues Cys-160, Cys-163, Cys-211, and Cys-214 each contribute to the Zn(2+) site. NAD(+)-binding positions include 251-253 (GSS), 277-279 (NIG), and Cys-295.

It belongs to the sirtuin family. Class II subfamily. Zn(2+) serves as cofactor.

Its subcellular location is the mitochondrion matrix. It catalyses the reaction N(6)-acetyl-L-lysyl-[protein] + NAD(+) + H2O = 2''-O-acetyl-ADP-D-ribose + nicotinamide + L-lysyl-[protein]. NAD-dependent protein deacylase. Catalyzes the NAD-dependent hydrolysis of acyl groups from lysine residues. The protein is NAD-dependent protein deacylase Sirt4 (Sirt4) of Drosophila melanogaster (Fruit fly).